Reading from the N-terminus, the 151-residue chain is Regulatory protein RecX (151 aa).

Belongs to the RecX family.

It is found in the cytoplasm. Functionally, modulates RecA activity. This chain is Regulatory protein RecX, found in Chlorobium phaeobacteroides (strain BS1).